Reading from the N-terminus, the 265-residue chain is WUSCHEL-related homeobox 3B (265 aa).

The homeobox; WUS-type DNA-binding region spans 4–68 (TPSTRWCPTP…NHKARERQRL (65 aa)). Disordered regions lie at residues 77 to 107 (QQQY…APPA) and 242 to 265 (PTKS…TSTN). The segment covering 254-265 (SSKSSSCSTSTN) has biased composition (low complexity).

Belongs to the WUS homeobox family. Predominantly expressed in tissues enriched for shoot meristems and young lateral organ primordia. First expressed in lateral domains of shoot meristems. It is then expressed in the margins of young lateral organ primordia. Not expressed in roots, seedling leaves or fully expanded coleoptiles. Also expressed in vegetative shoot apices (five leaf primordia and the SAM) and in the male inflorescence. Expressed at high level in the female inflorescence.

It localises to the nucleus. Its function is as follows. Probable transcription factor required to initiate organ founder cells in a lateral domain of shoot meristems. Involved in leaf formation. The polypeptide is WUSCHEL-related homeobox 3B (WOX3B) (Zea mays (Maize)).